The chain runs to 403 residues: Anti-sigma-I factor RsgI8 (403 aa).

Topologically, residues 1–59 (MTKQKGTILKLKNNLAIIMTSDCKIVSIKRQPGMYEGLEISFNKNEIINKKNKLAFYSR) are cytoplasmic. In terms of domain architecture, RsgI N-terminal anti-sigma spans 4–51 (QKGTILKLKNNLAIIMTSDCKIVSIKRQPGMYEGLEISFNKNEIINKK). The helical transmembrane segment at 60–80 (IAAGIAAIFIIMVISFNLFNN) threads the bilayer. Over 81–403 (NDVYAYVAID…KAKNSIEKMP (323 aa)) the chain is Extracellular. 3 stretches are compositionally biased toward basic and acidic residues: residues 254 to 314 (VHNV…EPAK), 324 to 335 (LPKDKTIPEEKT), and 349 to 403 (VEPK…EKMP). The disordered stretch occupies residues 254 to 403 (VHNVKKEEPK…KAKNSIEKMP (150 aa)).

As to quaternary structure, interacts (via RsgI N-terminal anti-sigma domain) with SigI8.

It localises to the cell membrane. Its function is as follows. Anti-sigma factor for SigI8. Negatively regulates SigI8 activity through direct interaction. The polypeptide is Anti-sigma-I factor RsgI8 (Acetivibrio thermocellus (strain ATCC 27405 / DSM 1237 / JCM 9322 / NBRC 103400 / NCIMB 10682 / NRRL B-4536 / VPI 7372) (Clostridium thermocellum)).